The following is a 171-amino-acid chain: 3-hydroxydecanoyl-[acyl-carrier-protein] dehydratase (171 aa).

The active site involves His70.

This sequence belongs to the thioester dehydratase family. FabA subfamily. Homodimer.

It is found in the cytoplasm. It carries out the reaction a (3R)-hydroxyacyl-[ACP] = a (2E)-enoyl-[ACP] + H2O. The catalysed reaction is (3R)-hydroxydecanoyl-[ACP] = (2E)-decenoyl-[ACP] + H2O. The enzyme catalyses (2E)-decenoyl-[ACP] = (3Z)-decenoyl-[ACP]. It participates in lipid metabolism; fatty acid biosynthesis. Its function is as follows. Necessary for the introduction of cis unsaturation into fatty acids. Catalyzes the dehydration of (3R)-3-hydroxydecanoyl-ACP to E-(2)-decenoyl-ACP and then its isomerization to Z-(3)-decenoyl-ACP. Can catalyze the dehydratase reaction for beta-hydroxyacyl-ACPs with saturated chain lengths up to 16:0, being most active on intermediate chain length. The polypeptide is 3-hydroxydecanoyl-[acyl-carrier-protein] dehydratase (Shewanella baltica (strain OS223)).